Consider the following 212-residue polypeptide: Large ribosomal subunit protein uL3 (212 aa).

Q153 carries the N5-methylglutamine modification.

Belongs to the universal ribosomal protein uL3 family. Part of the 50S ribosomal subunit. Forms a cluster with proteins L14 and L19. Methylated by PrmB.

Its function is as follows. One of the primary rRNA binding proteins, it binds directly near the 3'-end of the 23S rRNA, where it nucleates assembly of the 50S subunit. In Marinobacter nauticus (strain ATCC 700491 / DSM 11845 / VT8) (Marinobacter aquaeolei), this protein is Large ribosomal subunit protein uL3.